Reading from the N-terminus, the 1243-residue chain is Serine/threonine-protein kinase/endoribonuclease IRE1 (1243 aa).

The signal sequence occupies residues 1-35 (MMRRPPSQGRWSASHQKLLLAFAFILIPWLQLADA). The Lumenal segment spans residues 36-585 (QQQPQQPQIR…VKALPQSAAN (550 aa)). Disordered regions lie at residues 70–132 (HAAP…KPNY) and 149–172 (QPVR…GLAS). The span at 73–85 (PDVHPEAKFDTVN) shows a compositional bias: basic and acidic residues. Residues 90-99 (QQSTASPQQH) show a composition bias toward polar residues. Residues 163 to 172 (SSSAASGLAS) are compositionally biased toward low complexity. Asparagine 226, asparagine 470, and asparagine 554 each carry an N-linked (GlcNAc...) asparagine glycan. Residues 586–606 (SVIDFVSNPILIIFLIGSLIY) traverse the membrane as a helical segment. Over 607–1243 (NEKKLRRSYH…FREYYEPAGL (637 aa)) the chain is Cytoplasmic. The interval 638–765 (GDESGDDKDG…QSHENDPALT (128 aa)) is disordered. Low complexity predominate over residues 650–660 (PSSPSPRSQPQ). Positions 674–693 (ERNAGDQDKVKDNRSLHDVS) are enriched in basic and acidic residues. Residues 732 to 749 (KKKKAHRGRRGGVKHRKG) show a composition bias toward basic residues. The 297-residue stretch at 809–1105 (VDTDVELGMG…SREVMAHPFF (297 aa)) folds into the Protein kinase domain. ATP is bound by residues 815–823 (LGMGSNGTV) and lysine 837. Residues serine 819, lysine 837, glutamate 881, and cysteine 883 each contribute to the ADP site. The Proton acceptor role is filled by aspartate 931. Mg(2+) contacts are provided by asparagine 936 and aspartate 953. Residues 1108–1240 (PKKRLAFLCD…TDRFREYYEP (133 aa)) form the KEN domain.

The protein belongs to the protein kinase superfamily. Ser/Thr protein kinase family. Requires Mg(2+) as cofactor. In terms of processing, autophosphorylated mainly on serine residues; phosphorylation enables nucleotide binding by the active site.

It is found in the endoplasmic reticulum membrane. It carries out the reaction L-seryl-[protein] + ATP = O-phospho-L-seryl-[protein] + ADP + H(+). The enzyme catalyses L-threonyl-[protein] + ATP = O-phospho-L-threonyl-[protein] + ADP + H(+). In terms of biological role, senses unfolded proteins in the lumen of the endoplasmic reticulum via its N-terminal domain which leads to enzyme auto-activation. The active endoribonuclease domain splices precursor mRNAs to produce their mature form which then induces transcription of UPR target genes. This is Serine/threonine-protein kinase/endoribonuclease IRE1 from Hypocrea jecorina (strain QM6a) (Trichoderma reesei).